A 1374-amino-acid polypeptide reads, in one-letter code: DNA-directed RNA polymerase subunit beta' (1374 aa).

The disordered stretch occupies residues methionine 1–phenylalanine 47. Basic residues predominate over residues lysine 7–alanine 28. Low complexity predominate over residues alanine 29–proline 45. 4 residues coordinate Zn(2+): cysteine 258, cysteine 325, cysteine 332, and cysteine 335. The disordered stretch occupies residues valine 1343–glutamate 1374. Residues leucine 1362 to glutamate 1374 are compositionally biased toward low complexity.

Belongs to the RNA polymerase beta' chain family. RpoC2 subfamily. As to quaternary structure, in cyanobacteria the RNAP catalytic core is composed of 2 alpha, 1 beta, 1 beta', 1 gamma and 1 omega subunit. When a sigma factor is associated with the core the holoenzyme is formed, which can initiate transcription. It depends on Zn(2+) as a cofactor.

It catalyses the reaction RNA(n) + a ribonucleoside 5'-triphosphate = RNA(n+1) + diphosphate. In terms of biological role, DNA-dependent RNA polymerase catalyzes the transcription of DNA into RNA using the four ribonucleoside triphosphates as substrates. In Prochlorococcus marinus (strain MIT 9303), this protein is DNA-directed RNA polymerase subunit beta'.